Here is a 353-residue protein sequence, read N- to C-terminus: G-protein complex alpha subunit gpaA (353 aa).

The tract at residues 1–25 (MGCGMSTEDKEGKARNEEIENQLKR) is disordered. Positions 7–25 (TEDKEGKARNEEIENQLKR) are enriched in basic and acidic residues. The G-alpha domain maps to 32–353 (NEIKMLLLGA…QENLRLCGLI (322 aa)). The tract at residues 35–48 (KMLLLGAGESGKST) is G1 motif. Residues S47 and T181 each contribute to the a divalent metal cation site. The tract at residues 173–181 (DVLRSRVKT) is G2 motif. The G3 motif stretch occupies residues 196–205 (YRMFDVGGQR). The interval 265–272 (ILFLNKID) is G4 motif. Positions 323-328 (TCATDT) are G5 motif.

It belongs to the G-alpha family. G(q) subfamily. G proteins are composed of 3 units; alpha, beta and gamma. The alpha chain contains the guanine nucleotide binding site. Interacts with gprM.

In terms of biological role, G-protein complex alpha subunit that plays a role in conidiation and regulation of the biosynthesis of secondary metabolites such as dihydroxynaphthalene (DHN)-melanin, via interaction with the G protein-coupled receptor gprM. The chain is G-protein complex alpha subunit gpaA from Aspergillus fumigatus (strain CBS 144.89 / FGSC A1163 / CEA10) (Neosartorya fumigata).